Reading from the N-terminus, the 406-residue chain is MADFEWIDGGVTAAKGFRAGGIASGIKPSGKTDLALIYSENPSAAAGVYTTNLVQAAPVAYNRNLLQQRGKACAIVVNSGNANAATGKAGEEAAIETAQVFARALGFSADQVLVASTGVIGVPLPIEKIRTAAQALVDAATETGSDAAAEAILTTDLVAKSCAVRALIGGKTVHVGGIAKGSGMIHPQMATLLAFITSDCSVDIDLWRQIVARATDRSFNQITVDGDTSTNDMLLALASGEAKNPRILDAASPEAGLLEQMVSAVCVDLAKKVVRDGEGATKLIEVQVAGTGDDAQARKIALTVASSSLVKSAMFGNDPNWGRLAAAAGRAGVEFDPAALAVRLGAFALMEVGQPLAFDRAAASDYLKGSDTVEVHLQVGPGTGNGIAWGCDLSYDYVKINAEYTT.

Substrate contacts are provided by threonine 154, lysine 180, threonine 191, glutamate 278, asparagine 401, and threonine 406. The Nucleophile role is filled by threonine 191.

It belongs to the ArgJ family. In terms of assembly, heterotetramer of two alpha and two beta chains.

It is found in the cytoplasm. The catalysed reaction is N(2)-acetyl-L-ornithine + L-glutamate = N-acetyl-L-glutamate + L-ornithine. It catalyses the reaction L-glutamate + acetyl-CoA = N-acetyl-L-glutamate + CoA + H(+). It participates in amino-acid biosynthesis; L-arginine biosynthesis; L-ornithine and N-acetyl-L-glutamate from L-glutamate and N(2)-acetyl-L-ornithine (cyclic): step 1/1. It functions in the pathway amino-acid biosynthesis; L-arginine biosynthesis; N(2)-acetyl-L-ornithine from L-glutamate: step 1/4. Functionally, catalyzes two activities which are involved in the cyclic version of arginine biosynthesis: the synthesis of N-acetylglutamate from glutamate and acetyl-CoA as the acetyl donor, and of ornithine by transacetylation between N(2)-acetylornithine and glutamate. This is Arginine biosynthesis bifunctional protein ArgJ from Gloeobacter violaceus (strain ATCC 29082 / PCC 7421).